Reading from the N-terminus, the 411-residue chain is Tyrosine--tRNA ligase (411 aa).

Position 34 (Tyr-34) interacts with L-tyrosine. A 'HIGH' region motif is present at residues 39–48 (CTATSLHIGS). Residues Tyr-171 and Gln-175 each coordinate L-tyrosine. The 'KMSKS' region motif lies at 231 to 235 (KMGKT). Lys-234 contributes to the ATP binding site. The 67-residue stretch at 345-411 (ISAYELFHEA…GKKRHILVRV (67 aa)) folds into the S4 RNA-binding domain.

Belongs to the class-I aminoacyl-tRNA synthetase family. TyrS type 1 subfamily. As to quaternary structure, homodimer.

The protein resides in the cytoplasm. The enzyme catalyses tRNA(Tyr) + L-tyrosine + ATP = L-tyrosyl-tRNA(Tyr) + AMP + diphosphate + H(+). Catalyzes the attachment of tyrosine to tRNA(Tyr) in a two-step reaction: tyrosine is first activated by ATP to form Tyr-AMP and then transferred to the acceptor end of tRNA(Tyr). The chain is Tyrosine--tRNA ligase from Rickettsia massiliae (strain Mtu5).